A 112-amino-acid chain; its full sequence is UPF0102 protein TTHA0372 (112 aa).

Belongs to the UPF0102 family.

The polypeptide is UPF0102 protein TTHA0372 (Thermus thermophilus (strain ATCC 27634 / DSM 579 / HB8)).